Here is a 214-residue protein sequence, read N- to C-terminus: ATP phosphoribosyltransferase (214 aa).

Belongs to the ATP phosphoribosyltransferase family. Short subfamily. As to quaternary structure, heteromultimer composed of HisG and HisZ subunits.

Its subcellular location is the cytoplasm. It catalyses the reaction 1-(5-phospho-beta-D-ribosyl)-ATP + diphosphate = 5-phospho-alpha-D-ribose 1-diphosphate + ATP. It functions in the pathway amino-acid biosynthesis; L-histidine biosynthesis; L-histidine from 5-phospho-alpha-D-ribose 1-diphosphate: step 1/9. In terms of biological role, catalyzes the condensation of ATP and 5-phosphoribose 1-diphosphate to form N'-(5'-phosphoribosyl)-ATP (PR-ATP). Has a crucial role in the pathway because the rate of histidine biosynthesis seems to be controlled primarily by regulation of HisG enzymatic activity. The protein is ATP phosphoribosyltransferase of Lysinibacillus sphaericus (strain C3-41).